A 422-amino-acid chain; its full sequence is Synaptotagmin-1 (422 aa).

Topologically, residues M1–P57 are vesicular. The N-linked (GlcNAc...) asparagine glycan is linked to N25. A helical transmembrane segment spans residues P58–C80. 5 S-palmitoyl cysteine lipidation sites follow: C75, C76, C78, C80, and C83. The Cytoplasmic portion of the chain corresponds to K81–K422. The interval T113–K142 is disordered. The span at D122–K134 shows a compositional bias: acidic residues. A Phosphothreonine modification is found at T129. Positions E136–N382 are phospholipid binding. A C2 1 domain is found at K142–R261. Ca(2+)-binding residues include L172, D173, and D179. Residue Y230 is modified to Phosphotyrosine. Residues D231, F232, D233, S236, K237, and D239 each coordinate Ca(2+). S265 bears the Phosphoserine mark. Residues K273–H406 enclose the C2 2 domain. D304 and D310 together coordinate Ca(2+). Phosphoserine occurs at positions 343 and 345. Ca(2+) contacts are provided by D364, D366, and D372.

This sequence belongs to the synaptotagmin family. As to quaternary structure, homotetramer. Heterodimer; heterodimerizes with SYT2 in presence of calcium. Interacts with SCAMP5. Interacts with STON2. Forms a complex with SV2B, syntaxin 1 and SNAP25. Interacts with SV2A, SV2B and SV2C. Interacts with RIMS1. Interacts with PRRT2. Interacts with DNAJC5 in a phosphorylation-dependent manner. Interacts (via N-terminus) with RAB3A. Interacts with SYT12. Interacts with calmodulin. Interacts with DNM1 (via C-terminal proline-rich domain (PRD)); this interaction facilitates vesicle fission during clathrin-mediated endocytosis (CME). Requires Ca(2+) as cofactor. Glycosylated. As to expression, expressed in melanocytes.

It is found in the cytoplasmic vesicle. Its subcellular location is the secretory vesicle membrane. The protein resides in the secretory vesicle. The protein localises to the synaptic vesicle membrane. It localises to the chromaffin granule membrane. It is found in the cytoplasm. Calcium sensor that participates in triggering neurotransmitter release at the synapse. May have a regulatory role in the membrane interactions during trafficking of synaptic vesicles at the active zone of the synapse. It binds acidic phospholipids with a specificity that requires the presence of both an acidic head group and a diacyl backbone. A Ca(2+)-dependent interaction between synaptotagmin and putative receptors for activated protein kinase C has also been reported. It can bind to at least three additional proteins in a Ca(2+)-independent manner; these are neurexins, syntaxin and AP2. Plays a role in dendrite formation by melanocytes. The sequence is that of Synaptotagmin-1 from Homo sapiens (Human).